The sequence spans 837 residues: AdoMet-dependent rRNA methyltransferase SPB1 (837 aa).

5 residues coordinate S-adenosyl-L-methionine: glycine 58, tryptophan 60, aspartate 78, aspartate 94, and aspartate 119. The active-site Proton acceptor is lysine 159. Residues 345-390 (LNEEEQIEKELRDLQEKQKQKQKREKRRKNEEKQKELTRMQMNMLT) are a coiled coil. Disordered stretches follow at residues 359–381 (QEKQ…QKEL), 483–529 (FRAK…DEDD), 573–644 (TDDV…TTKE), and 779–808 (TKKQ…KGIK). Positions 372–381 (RKNEEKQKEL) are enriched in basic and acidic residues. The span at 518 to 529 (ESDDSELSDEDD) shows a compositional bias: acidic residues. Basic and acidic residues predominate over residues 593–602 (SYNEMKKEDL). Residues 603 to 635 (SDSSDEDSSSESDFEIVANDESDGDIDSDYDSD) show a composition bias toward acidic residues.

The protein belongs to the class I-like SAM-binding methyltransferase superfamily. RNA methyltransferase RlmE family. SPB1 subfamily. As to quaternary structure, component of the nucleolar and nucleoplasmic pre-60S ribosomal particle.

It is found in the nucleus. The protein resides in the nucleolus. The catalysed reaction is a ribonucleotide in rRNA + S-adenosyl-L-methionine = a 2'-O-methylribonucleotide in rRNA + S-adenosyl-L-homocysteine + H(+). Required for proper assembly of pre-ribosomal particles during the biogenesis of the 60S ribosomal subunit. This is AdoMet-dependent rRNA methyltransferase SPB1 from Candida glabrata (strain ATCC 2001 / BCRC 20586 / JCM 3761 / NBRC 0622 / NRRL Y-65 / CBS 138) (Yeast).